Reading from the N-terminus, the 300-residue chain is Geranylgeranyl pyrophosphate synthase (300 aa).

Met-1 carries the post-translational modification N-acetylmethionine. Lys-25, Arg-28, and His-57 together coordinate isopentenyl diphosphate. Mg(2+)-binding residues include Asp-64 and Asp-68. Position 73 (Arg-73) interacts with dimethylallyl diphosphate. Isopentenyl diphosphate is bound at residue Arg-74. Residues Lys-151, Thr-152, Gln-185, Lys-202, and Lys-212 each contribute to the dimethylallyl diphosphate site.

This sequence belongs to the FPP/GGPP synthase family. As to quaternary structure, homohexamer; trimer of homodimers. Mg(2+) serves as cofactor. Abundantly expressed in testis. Found in other tissues to a lower extent. Expressed in dermal fibroblast and skeletal muscle.

The protein localises to the cytoplasm. The protein resides in the perinuclear region. It localises to the myofibril. It is found in the sarcomere. Its subcellular location is the z line. The enzyme catalyses isopentenyl diphosphate + dimethylallyl diphosphate = (2E)-geranyl diphosphate + diphosphate. It catalyses the reaction isopentenyl diphosphate + (2E)-geranyl diphosphate = (2E,6E)-farnesyl diphosphate + diphosphate. It carries out the reaction isopentenyl diphosphate + (2E,6E)-farnesyl diphosphate = (2E,6E,10E)-geranylgeranyl diphosphate + diphosphate. It participates in isoprenoid biosynthesis; farnesyl diphosphate biosynthesis; farnesyl diphosphate from geranyl diphosphate and isopentenyl diphosphate: step 1/1. It functions in the pathway isoprenoid biosynthesis; geranyl diphosphate biosynthesis; geranyl diphosphate from dimethylallyl diphosphate and isopentenyl diphosphate: step 1/1. Its pathway is isoprenoid biosynthesis; geranylgeranyl diphosphate biosynthesis; geranylgeranyl diphosphate from farnesyl diphosphate and isopentenyl diphosphate: step 1/1. Subject to product inhibition by geranylgeranyl diphosphate. Catalyzes the trans-addition of the three molecules of IPP onto DMAPP to form geranylgeranyl pyrophosphate, an important precursor of carotenoids and geranylated proteins. The polypeptide is Geranylgeranyl pyrophosphate synthase (GGPS1) (Homo sapiens (Human)).